The chain runs to 102 residues: Mitochondrial import inner membrane translocase subunit Tim10 B (102 aa).

Positions 27-51 match the Twin CX3C motif motif; that stretch reads CFQRCVPSLHHRALDAEEEACLHSC. Cystine bridges form between Cys-27–Cys-51 and Cys-31–Cys-47.

Component of the TIM22 complex, which core is composed of TIMM22, associated with TIMM10 (TIMM10A and/or TIMM10B), TIMM9, AGK and TIMM29.

It is found in the mitochondrion inner membrane. In terms of biological role, component of the TIM22 complex, a complex that mediates the import and insertion of multi-pass transmembrane proteins into the mitochondrial inner membrane. The TIM22 complex forms a twin-pore translocase that uses the membrane potential as the external driving force. In the TIM22 complex, it may act as a docking point for the soluble 70 kDa complex that guides the target proteins in transit through the aqueous mitochondrial intermembrane space. The protein is Mitochondrial import inner membrane translocase subunit Tim10 B (TIMM10B) of Pongo abelii (Sumatran orangutan).